The primary structure comprises 609 residues: Heat shock factor protein (609 aa).

Positions 1 to 33 (MIQTASTISSNGGTNQGMESSSANSPEMNGTQN) are enriched in polar residues. A disordered region spans residues 1–47 (MIQTASTISSNGGTNQGMESSSANSPEMNGTQNSMSVGMSGSGSSQN). The segment covering 34–45 (SMSVGMSGSGSS) has biased composition (low complexity). Residues 50–156 (ITQFSNKLYN…LLCLVTRKKA (107 aa)) mediate DNA binding. Disordered stretches follow at residues 255-298 (PTVS…GKYR), 310-371 (SSFN…TDPK), 411-445 (NNTS…QPVQ), and 567-609 (SNGN…SIGA). Polar residues-rich tracts occupy residues 257 to 277 (VSPT…TTAN), 339 to 360 (DSFN…TDVP), 422 to 443 (YRGS…NLQP), and 567 to 597 (SNGN…SSPR). At Ser-350 the chain carries Phosphoserine. A compositionally biased stretch (basic residues) spans 598-609 (QVRKKRKSSIGA).

Belongs to the HSF family. In terms of assembly, homotrimer.

The protein resides in the nucleus. In terms of biological role, DNA-binding protein that specifically binds heat shock promoter elements (HSE) and activates transcription. Also required for growth at normal temperatures. The sequence is that of Heat shock factor protein (hsf1) from Schizosaccharomyces pombe (strain 972 / ATCC 24843) (Fission yeast).